The chain runs to 187 residues: uncharacterized protein (187 aa).

A helical transmembrane segment spans residues 8–28 (ITFFIILLICLICILLLLVVF). A disordered region spans residues 99-153 (PLENRRDMEAEEENQINEKQEPENAGETGQEEDDGLQKIHTSVTRTPSVVESQKR). Residues 137 to 149 (IHTSVTRTPSVVE) show a composition bias toward polar residues.

Its subcellular location is the membrane. This is an uncharacterized protein from Homo sapiens (Human).